The chain runs to 223 residues: 2-C-methyl-D-erythritol 4-phosphate cytidylyltransferase (223 aa).

Belongs to the IspD/TarI cytidylyltransferase family. IspD subfamily.

It catalyses the reaction 2-C-methyl-D-erythritol 4-phosphate + CTP + H(+) = 4-CDP-2-C-methyl-D-erythritol + diphosphate. The protein operates within isoprenoid biosynthesis; isopentenyl diphosphate biosynthesis via DXP pathway; isopentenyl diphosphate from 1-deoxy-D-xylulose 5-phosphate: step 2/6. In terms of biological role, catalyzes the formation of 4-diphosphocytidyl-2-C-methyl-D-erythritol from CTP and 2-C-methyl-D-erythritol 4-phosphate (MEP). The protein is 2-C-methyl-D-erythritol 4-phosphate cytidylyltransferase of Prochlorococcus marinus (strain MIT 9515).